The following is a 101-amino-acid chain: Apolipoprotein C-II (101 aa).

The signal sequence occupies residues 1–22 (MGTRFLLALCLVLLVLGFEVQG). The segment at 66-74 (AVDEKLRDL) is lipid binding. Residues 78–101 (STAAMSTYTGIFTDQVLSVLKGEE) are lipoprotein lipase cofactor.

It belongs to the apolipoprotein C2 family. Proapolipoprotein C-II is synthesized as a sialic acid containing glycoprotein which is subsequently desialylated prior to its proteolytic processing. Post-translationally, proapolipoprotein C-II, the major form found in plasma undergoes proteolytic cleavage of its N-terminal hexapeptide to generate apolipoprotein C-II, which occurs as the minor form in plasma.

It is found in the secreted. In terms of biological role, component of chylomicrons, very low-density lipoproteins (VLDL), low-density lipoproteins (LDL), and high-density lipoproteins (HDL) in plasma. Plays an important role in lipoprotein metabolism as an activator of lipoprotein lipase. Both proapolipoprotein C-II and apolipoprotein C-II can activate lipoprotein lipase. This is Apolipoprotein C-II (APOC2) from Macaca fascicularis (Crab-eating macaque).